A 633-amino-acid chain; its full sequence is NBPF family member NBPF3 (633 aa).

Positions R15 to A52 are disordered. The stretch at L127–L186 forms a coiled coil. 5 consecutive Olduvai domains span residues E221–P313, E314–P402, S405–D460, R461–P552, and N555–H633. Residues E316 to G326 are compositionally biased toward basic and acidic residues. The segment at E316–F370 is disordered. Acidic residues predominate over residues E335–D350. The tract at residues K463 to P484 is disordered.

The protein belongs to the NBPF family. In terms of tissue distribution, expressed in testis and fetal heart, as well as in non small cell lung carcinoma and neuroblastoma cell line.

The protein resides in the cytoplasm. This chain is NBPF family member NBPF3, found in Homo sapiens (Human).